We begin with the raw amino-acid sequence, 186 residues long: Ribosome-recycling factor (186 aa).

Belongs to the RRF family.

It localises to the cytoplasm. In terms of biological role, responsible for the release of ribosomes from messenger RNA at the termination of protein biosynthesis. May increase the efficiency of translation by recycling ribosomes from one round of translation to another. The chain is Ribosome-recycling factor from Burkholderia ambifaria (strain ATCC BAA-244 / DSM 16087 / CCUG 44356 / LMG 19182 / AMMD) (Burkholderia cepacia (strain AMMD)).